The following is a 247-amino-acid chain: Adenosylcobinamide-GDP ribazoletransferase (247 aa).

A run of 5 helical transmembrane segments spans residues 34–54 (IITFPLIGLLLGAISGLVFMV), 57–77 (AWCGAPLAALFSVLVLALMTG), 113–133 (GGLALIFVVLAKILVLSELAL), 138–158 (ILASLAAACAVSRGTAALLMY), and 194–214 (VLLLGMHGVAAMVVTMVAIFI).

The protein belongs to the CobS family. Mg(2+) serves as cofactor.

The protein resides in the cell inner membrane. The enzyme catalyses alpha-ribazole + adenosylcob(III)inamide-GDP = adenosylcob(III)alamin + GMP + H(+). It catalyses the reaction alpha-ribazole 5'-phosphate + adenosylcob(III)inamide-GDP = adenosylcob(III)alamin 5'-phosphate + GMP + H(+). It participates in cofactor biosynthesis; adenosylcobalamin biosynthesis; adenosylcobalamin from cob(II)yrinate a,c-diamide: step 7/7. Functionally, joins adenosylcobinamide-GDP and alpha-ribazole to generate adenosylcobalamin (Ado-cobalamin). Also synthesizes adenosylcobalamin 5'-phosphate from adenosylcobinamide-GDP and alpha-ribazole 5'-phosphate. The polypeptide is Adenosylcobinamide-GDP ribazoletransferase (Shigella flexneri serotype 5b (strain 8401)).